The sequence spans 215 residues: Outer-membrane lipoprotein LolB (215 aa).

An N-terminal signal peptide occupies residues 1 to 19; it reads MSKLRKITSLIFLTIIMVG. Residue Cys20 is the site of N-palmitoyl cysteine attachment. A lipid anchor (S-diacylglycerol cysteine) is attached at Cys20.

The protein belongs to the LolB family. In terms of assembly, monomer.

The protein localises to the cell outer membrane. Functionally, plays a critical role in the incorporation of lipoproteins in the outer membrane after they are released by the LolA protein. This chain is Outer-membrane lipoprotein LolB, found in Vibrio atlanticus (strain LGP32) (Vibrio splendidus (strain Mel32)).